The following is a 421-amino-acid chain: Medium-chain specific acyl-CoA dehydrogenase, mitochondrial (421 aa).

The N-terminal 25 residues, 1–25 (MAAAFGRCCRVLRSISRFHWRSQHT), are a transit peptide targeting the mitochondrion. An N6-acetyllysine; alternate modification is found at lysine 69. Lysine 69 carries the post-translational modification N6-succinyllysine; alternate. 158-167 (YCVTEPGAGS) is an FAD binding site. Position 167 (serine 167) interacts with octanoyl-CoA. N6-succinyllysine is present on lysine 179. 191–193 (WIT) serves as a coordination point for FAD. N6-acetyllysine; alternate occurs at positions 212, 217, 259, and 271. Lysine 212, lysine 217, lysine 259, and lysine 271 each carry N6-succinyllysine; alternate. Aspartate 278 is an octanoyl-CoA binding site. Lysine 279 carries the N6-acetyllysine modification. Residue arginine 281 participates in octanoyl-CoA binding. Position 301 is an N6-acetyllysine (lysine 301). FAD contacts are provided by residues 306–308 (RKT) and 316–317 (HQ). Residues arginine 349 and threonine 351 each contribute to the octanoyl-CoA site. A Phosphothreonine modification is found at threonine 351. 374-378 (QIFGG) provides a ligand contact to FAD. An octanoyl-CoA-binding site is contributed by glutamate 401. The active-site Proton acceptor is the glutamate 401. 402–405 (GTSQ) is an FAD binding site.

It belongs to the acyl-CoA dehydrogenase family. Homotetramer. Interacts with the heterodimeric electron transfer flavoprotein ETF. FAD serves as cofactor. Acetylated. Could occur at proximity of the cofactor-binding sites and reduce the catalytic activity. Could be deacetylated by SIRT3.

The protein localises to the mitochondrion matrix. It catalyses the reaction a medium-chain 2,3-saturated fatty acyl-CoA + oxidized [electron-transfer flavoprotein] + H(+) = a medium-chain (2E)-enoyl-CoA + reduced [electron-transfer flavoprotein]. It carries out the reaction pentanoyl-CoA + oxidized [electron-transfer flavoprotein] + H(+) = (2E)-pentenoyl-CoA + reduced [electron-transfer flavoprotein]. The enzyme catalyses hexanoyl-CoA + oxidized [electron-transfer flavoprotein] + H(+) = (2E)-hexenoyl-CoA + reduced [electron-transfer flavoprotein]. The catalysed reaction is octanoyl-CoA + oxidized [electron-transfer flavoprotein] + H(+) = (2E)-octenoyl-CoA + reduced [electron-transfer flavoprotein]. It catalyses the reaction decanoyl-CoA + oxidized [electron-transfer flavoprotein] + H(+) = (2E)-decenoyl-CoA + reduced [electron-transfer flavoprotein]. It carries out the reaction dodecanoyl-CoA + oxidized [electron-transfer flavoprotein] + H(+) = (2E)-dodecenoyl-CoA + reduced [electron-transfer flavoprotein]. The enzyme catalyses tetradecanoyl-CoA + oxidized [electron-transfer flavoprotein] + H(+) = (2E)-tetradecenoyl-CoA + reduced [electron-transfer flavoprotein]. The catalysed reaction is oxidized [electron-transfer flavoprotein] + hexadecanoyl-CoA + H(+) = (2E)-hexadecenoyl-CoA + reduced [electron-transfer flavoprotein]. It participates in lipid metabolism; mitochondrial fatty acid beta-oxidation. Medium-chain specific acyl-CoA dehydrogenase is one of the acyl-CoA dehydrogenases that catalyze the first step of mitochondrial fatty acid beta-oxidation, an aerobic process breaking down fatty acids into acetyl-CoA and allowing the production of energy from fats. The first step of fatty acid beta-oxidation consists in the removal of one hydrogen from C-2 and C-3 of the straight-chain fatty acyl-CoA thioester, resulting in the formation of trans-2-enoyl-CoA. Electron transfer flavoprotein (ETF) is the electron acceptor that transfers electrons to the main mitochondrial respiratory chain via ETF-ubiquinone oxidoreductase (ETF dehydrogenase). Among the different mitochondrial acyl-CoA dehydrogenases, medium-chain specific acyl-CoA dehydrogenase acts specifically on acyl-CoAs with saturated 6 to 12 carbons long primary chains. The sequence is that of Medium-chain specific acyl-CoA dehydrogenase, mitochondrial from Macaca fascicularis (Crab-eating macaque).